We begin with the raw amino-acid sequence, 81 residues long: Acyl carrier protein (81 aa).

A Carrier domain is found at 5-80 (EEIFSKVKSI…DIVSYIEKKL (76 aa)). Ser40 is modified (O-(pantetheine 4'-phosphoryl)serine).

The protein belongs to the acyl carrier protein (ACP) family. Post-translationally, 4'-phosphopantetheine is transferred from CoA to a specific serine of apo-ACP by AcpS. This modification is essential for activity because fatty acids are bound in thioester linkage to the sulfhydryl of the prosthetic group.

Its subcellular location is the cytoplasm. It functions in the pathway lipid metabolism; fatty acid biosynthesis. Its function is as follows. Carrier of the growing fatty acid chain in fatty acid biosynthesis. The chain is Acyl carrier protein from Thermotoga maritima (strain ATCC 43589 / DSM 3109 / JCM 10099 / NBRC 100826 / MSB8).